Reading from the N-terminus, the 331-residue chain is uncharacterized protein (331 aa).

WD repeat units lie at residues 53-92 (KAHT…KSAV), 97-139 (QQST…KLIR), 144-184 (AHND…DSTD), and 300-331 (ASEE…AFRV).

Its subcellular location is the cytoplasm. It is found in the nucleus. This is an uncharacterized protein from Schizosaccharomyces pombe (strain 972 / ATCC 24843) (Fission yeast).